A 301-amino-acid polypeptide reads, in one-letter code: G-protein coupled receptor homolog U51 (301 aa).

Residues 1-15 (MEKETKSLAWPATAE) are Extracellular-facing. Residues 16 to 36 (FYGWVFIFSSIQLCTMVLLTV) traverse the membrane as a helical segment. Residues 37–48 (RFNSFKVGREYA) are Cytoplasmic-facing. Residues 49-69 (VFTFAGMSFNCFLLPIKMGLL) traverse the membrane as a helical segment. Residues 70-82 (SGHWSLPRDFCAI) are Extracellular-facing. A helical transmembrane segment spans residues 83 to 103 (LLYIDDFSIYFSSWSLVFMAI). The Cytoplasmic portion of the chain corresponds to 104-122 (ERINHFCYSTPLLNENSKA). The chain crosses the membrane as a helical span at residues 123–143 (LAKVCFPIVWIISGVQALQML). Residues 144–168 (NNYKATALQNETPQCFLAFLRSGYD) are Extracellular-facing. Residues 169–189 (MWLMLVYSVMIPVMLVFIYIY) form a helical membrane-spanning segment. Residues 190–199 (SKNFMLLKDE) lie on the Cytoplasmic side of the membrane. The helical transmembrane segment at 200–220 (LSTVTTYLCIYLLLGTIAHLP) threads the bilayer. Over 221–238 (KAGLSEIESDKIFYGLRD) the chain is Extracellular. A helical membrane pass occupies residues 239-259 (IFMALPVLKVYYIPVMAYCMA). Residues 260–301 (CDDHTVPVRLCSIWLVNLCKKCFSCTRREKESDLEVGIKMLK) are Cytoplasmic-facing.

This sequence belongs to the G-protein coupled receptor 1 family.

It localises to the host cell membrane. This is G-protein coupled receptor homolog U51 (U51) from Homo sapiens (Human).